The following is a 338-amino-acid chain: Cell division protein ZipA (338 aa).

At 1-2 (MS) the chain is on the periplasmic side. Residues 3 to 23 (LREWLIAIGTLVIIGIVIDGV) traverse the membrane as a helical segment. The Cytoplasmic portion of the chain corresponds to 24–338 (RRMRRARKES…FERKQRSQRA (315 aa)). The segment at 33-192 (SMAISSGMGA…RKNQPLAGAN (160 aa)) is disordered. 2 stretches are compositionally biased toward basic and acidic residues: residues 70-81 (TLEDRGYLKRDM) and 138-162 (EVDR…RAEE).

The protein belongs to the ZipA family. As to quaternary structure, interacts with FtsZ via their C-terminal domains.

It is found in the cell inner membrane. In terms of biological role, essential cell division protein that stabilizes the FtsZ protofilaments by cross-linking them and that serves as a cytoplasmic membrane anchor for the Z ring. Also required for the recruitment to the septal ring of downstream cell division proteins. The sequence is that of Cell division protein ZipA from Marinobacter nauticus (strain ATCC 700491 / DSM 11845 / VT8) (Marinobacter aquaeolei).